The sequence spans 180 residues: Anaerobic nitrite reductase GLB0 (180 aa).

In terms of domain architecture, Globin spans 23–172 (TYSKENEQLV…LAEQVKAEMH (150 aa)). A Homodimerization motif is present at residues 56–60 (EIAPG). 6 residues coordinate heme b: Ser66, Lys80, His84, Lys114, Thr118, and His119. Positions 126–138 (DDQFEIVKEAILY) match the Homodimerization motif.

This sequence belongs to the plant globin family. As to quaternary structure, homodimer. Requires heme b as cofactor.

The protein localises to the cytoplasm. The protein resides in the nucleus. The catalysed reaction is Fe(III)-heme b-[protein] + nitric oxide + H2O = Fe(II)-heme b-[protein] + nitrite + 2 H(+). Functionally, phytoglobin that reduces nitrite to nitric oxide (NO) under anoxic conditions (e.g. during flooding or in waterlogged soil). May not function as an oxygen storage or transport protein. Has an unusually high affinity for O(2) through an hexacoordinate heme iron because of a very low dissociation constant. The chain is Anaerobic nitrite reductase GLB0 from Physcomitrium patens (Spreading-leaved earth moss).